Consider the following 231-residue polypeptide: uncharacterized protein (231 aa).

Val-10–Val-34 serves as a coordination point for NADP(+). Ser-140 is a binding site for substrate. Tyr-153 serves as the catalytic Proton acceptor.

Belongs to the short-chain dehydrogenases/reductases (SDR) family.

This is an uncharacterized protein from Staphylococcus aureus (strain MW2).